The sequence spans 256 residues: MLVVISPAKRLDWAERDVATTEPAFQDDAVRLAKTARNLTLGDLKKLMGLSDDLARLNRDRFREFADAPGADVTRPAALAFAGDTYQGLEAASLDSEEMDWAQQHLRILSGLYGVLRPLDAIQAYRLEMGSRLKTRRGTSLYDYWGDQLSRTLNAQADEIGTDVLVNCASQEYFGAVDPKALKLRVITPVFMEDKGGAPKIVSFFAKKARGAMARYIVQRRLTDPQALSEFDSGGYQYNADLSAPDKPVFLRPYQG.

The protein belongs to the UPF0246 family.

The chain is UPF0246 protein SPO0106 from Ruegeria pomeroyi (strain ATCC 700808 / DSM 15171 / DSS-3) (Silicibacter pomeroyi).